The sequence spans 353 residues: Pleckstrin-2 (353 aa).

Met-1 is subject to N-acetylmethionine. Residues 4-104 (GVLKEGFLVK…WAFEITGAIH (101 aa)) enclose the PH 1 domain. Residue Ser-120 is modified to Phosphoserine. One can recognise a DEP domain in the interval 139-225 (TSTGIRPSPN…DSTALYTFAE (87 aa)). The PH 2 domain occupies 247–353 (TVVKQGYLSK…EWIEAIKKLT (107 aa)).

In terms of tissue distribution, ubiquitous. Most abundant in the thymus, large bowel, small bowel, stomach, and prostate.

It localises to the cell projection. The protein resides in the lamellipodium membrane. It is found in the cytoplasm. The protein localises to the cytoskeleton. Functionally, may help orchestrate cytoskeletal arrangement. Contribute to lamellipodia formation. Overexpression of pleckstrin 2 causes large lamellipodia and peripheral ruffle formation. The sequence is that of Pleckstrin-2 (Plek2) from Mus musculus (Mouse).